Reading from the N-terminus, the 372-residue chain is DSC E3 ubiquitin ligase complex subunit 2 (372 aa).

The next 5 helical transmembrane spans lie at 26–46, 54–74, 95–115, 126–146, and 160–180; these read VVAG…LHLL, ILLW…LFII, YMFI…SLLF, TFLI…TVFV, and VIPM…NAFL. Positions 246–314 are disordered; the sequence is TENENQVENP…LPTGPASQLY (69 aa). Polar residues predominate over residues 249–268; sequence ENQVENPVSNADANDSPTRQ. A Phosphoserine modification is found at S264. T266 bears the Phosphothreonine mark. The span at 269 to 284 shows a compositional bias: low complexity; sequence NARATAIASSSNTAAS. Over residues 286-305 the composition is skewed to polar residues; the sequence is RNRQQISHPPLGRTSSSSVL. Positions 332 to 368 constitute a UBA domain; that stretch reads EDINTVQTIMQTSRAQAIQALSQTNDVQRAVELLLEQ.

Component of the DSC E3 ubiquitin ligase complex composed of dsc1, dsc2, dsc3 and dsc4.

It is found in the golgi apparatus membrane. The enzyme catalyses S-ubiquitinyl-[E2 ubiquitin-conjugating enzyme]-L-cysteine + [acceptor protein]-L-lysine = [E2 ubiquitin-conjugating enzyme]-L-cysteine + N(6)-ubiquitinyl-[acceptor protein]-L-lysine.. It functions in the pathway protein modification; protein ubiquitination. Functionally, component of the DSC E3 ubiquitin ligase complex which is required for the sre1 transcriptional activator proteolytic cleavage to release the soluble transcription factor from the membrane in low oxygen or sterol conditions. The complex also plays an important role in the multivesicular body (MVB) pathway and functions in a post-endoplasmic reticulum pathway for protein degradation. The protein is DSC E3 ubiquitin ligase complex subunit 2 (dsc2) of Schizosaccharomyces pombe (strain 972 / ATCC 24843) (Fission yeast).